Reading from the N-terminus, the 219-residue chain is Transmembrane emp24 domain-containing protein 10 (219 aa).

The N-terminal stretch at 1 to 31 (MSGWSGPLARRGPGPLALLFLFLLGPSSVLA) is a signal peptide. Residues 1-142 (MSGWSGPLAR…KNYEEIAKVE (142 aa)) form a required for interaction with STX17 region. Topologically, residues 32-185 (ISFHLPVNSR…RDTNESTNTR (154 aa)) are lumenal. Residues 41–193 (RKCLREEIHK…TRVLYFSIFS (153 aa)) enclose the GOLD domain. The segment at 147-178 (LEVELRRLEDLSESIVNDFAYMKKREEEMRDT) is required for TMED10 and TMED2 cis-Golgi network localization. 2 positions are modified to dimethylated arginine: Arg-171 and Arg-176. The N-linked (GlcNAc...) asparagine glycan is linked to Asn-179. The chain crosses the membrane as a helical span at residues 186-206 (VLYFSIFSMFCLIGLATWQVF). The interaction with COPG1 stretch occupies residues 204–219 (QVFYLRRFFKAKKLIE). Residues 207–219 (YLRRFFKAKKLIE) lie on the Cytoplasmic side of the membrane. Positions 207 to 219 (YLRRFFKAKKLIE) are interaction with ARF1 and IL1B. Positions 211–212 (FF) match the COPII vesicle coat-binding motif. The COPI vesicle coat-binding signature appears at 211-219 (FFKAKKLIE).

Belongs to the EMP24/GP25L family. Predominantly dimeric and to a lesser extent monomeric in the ER. Monomer and dimer in ERGIC and cis-Golgi network. Forms homooligomer (via GOLD domain); the assembly is promoted by direct binding with leaderless cargos and may form a protein channel that facilitates cargo entry into the ERGIC. Forms heterooligomeric complexes with other members of the p24 family such as TMED2, TMED7 and TMED9. Interacts (via GOLD domain) with TMED2 (via GOLD domain); the complex is required for export of TMED10 from the ER to the cis-Golgi network; the complex is proposed to be involved in cis-Golgi network dynamics and / or biogenesis. Associates with the COPI vesicle coat subunits (coatomer). Tetramerization of the cytoplasmic domain at the Golgi membrane in vitro; the complex is proposed to interact with COPI coatomer and induce budding of the vesicles. Interacts with COPG1; the interaction involves TMED10 homodimer. Interacts with ARF1 (GDP-bound); the interaction probably involves a TMED10 oligomer. Interacts with SEC23A, SEC24B, SEC24C and SEC24D components of the coat protein complex II/COPII, indicative of an association of TMED10 with the COPII vesicle coat. Interacts with CD59. Interacts with MPPE1/PGAP5; the complex might recruit and sort GPI-anchored proteins to the ER-exit site, or the interaction might lead to recycling of PGAP5 between the ER and the Golgi. Interacts with F2LR1/PAR2. Interacts with KDELR2/ERD2; the interaction is disrupted by KDELR2 ligand. Found in a complex composed at least of SURF4, TMED2 and TMED10. Associates with the presenilin-dependent gamma-secretase complex. Interacts with STX17; the interaction is direct. Interacts with IL-1; the interaction is direct. Interacts with RAB21 (active GTP-bound form); the interaction is indirect and regulates TMED10 abundance and localization at the Golgi.

It is found in the endoplasmic reticulum membrane. The protein resides in the endoplasmic reticulum-Golgi intermediate compartment membrane. The protein localises to the golgi apparatus membrane. It localises to the golgi apparatus. Its subcellular location is the cis-Golgi network membrane. It is found in the trans-Golgi network membrane. The protein resides in the cytoplasmic vesicle. The protein localises to the secretory vesicle membrane. It localises to the cell membrane. Its subcellular location is the melanosome. Its function is as follows. Cargo receptor involved in protein vesicular trafficking and quality control in the endoplasmic reticulum (ER) and Golgi. The p24 protein family is a group of transmembrane proteins that bind coat protein complex I/COPI and coat protein complex II/COPII involved in vesicular trafficking between the membranes. Acts at the lumenal side for incorporation of secretory cargo molecules into transport vesicles and involved in vesicle coat formation at the cytoplasmic side. Mainly functions in the early secretory pathway and cycles between the ER, ER-Golgi intermediate compartment (ERGIC) and Golgi, mediating cargo transport through COPI and COPII-coated vesicles. In COPII vesicle-mediated anterograde transport, involved in the transport of GPI-anchored proteins by acting together with TMED2 as their cargo receptor; the function specifically implies SEC24C and SEC24D of the COPII vesicle coat and lipid raft-like microdomains of the ER. Recognizes GPI anchors structural remodeled in the ER by the GPI inositol-deacylase/PGAP1 and the metallophosphoesterase MPPE1/PGAP5. In COPI vesicle-mediated retrograde transport, involved in the biogenesis of COPI vesicles and vesicle coat recruitment. Involved in trafficking of amyloid beta A4 protein and soluble APP-beta release (independent from the modulation of gamma-secretase activity). Involved in the KDELR2-mediated retrograde transport of the toxin A subunit (CTX-A-K63)together with COPI and the COOH terminus of KDELR2. On Golgi membranes, acts as a primary receptor for ARF1-GDP, a GTP-binding protein involved in COPI-vesicle formation. Increases coatomer-dependent GTPase-activating activity of ARFGAP2 which mediates the hydrolysis of ARF1-bound GTP and therefore modulates protein trafficking from the Golgi apparatus. Involved in the exocytic trafficking of G protein-coupled receptors F2LR1/PAR2 (trypsin and tryspin-like enzyme receptor), OPRM1 (opioid receptor) and P2RY4 (UTD and UDP receptor) from the Golgi to the plasma membrane, thus contributing to receptor resensitization. In addition to its cargo receptor activity, may also act as a protein channel after oligomerization, facilitating the post-translational entry of leaderless cytoplasmic cargo into the ERGIC. Involved in the translocation into ERGIC, the vesicle entry and the secretion of leaderless cargos (lacking the secretion signal sequence), including the mature form of interleukin 1/IL-1 family members, the alpha-crystallin B chain HSPB5, the carbohydrate-binding proteins galectin-1/LGALS1 and galectin-3/LGALS3, the microtubule-associated protein Tau/MAPT, and the annexin A1/ANXA1; the translocation process is dependent on cargo protein unfolding and enhanced by chaperones HSP90AB1 and HSP90B1/GRP9. Could also associates with the presenilin-dependent gamma-secretase complex in order to regulate gamma-cleavages of the amyloid beta A4 protein to yield amyloid-beta 40/Abeta40. In Oryctolagus cuniculus (Rabbit), this protein is Transmembrane emp24 domain-containing protein 10 (TMED10).